A 515-amino-acid polypeptide reads, in one-letter code: Histidine ammonia-lyase (515 aa).

Positions 145 to 147 form a cross-link, 5-imidazolinone (Ala-Gly); the sequence is ASG. The residue at position 146 (Ser146) is a 2,3-didehydroalanine (Ser).

This sequence belongs to the PAL/histidase family. Post-translationally, contains an active site 4-methylidene-imidazol-5-one (MIO), which is formed autocatalytically by cyclization and dehydration of residues Ala-Ser-Gly.

The protein resides in the cytoplasm. The catalysed reaction is L-histidine = trans-urocanate + NH4(+). It participates in amino-acid degradation; L-histidine degradation into L-glutamate; N-formimidoyl-L-glutamate from L-histidine: step 1/3. The sequence is that of Histidine ammonia-lyase from Gluconobacter oxydans (strain 621H) (Gluconobacter suboxydans).